The chain runs to 1047 residues: tRNA wybutosine-synthesizing protein 4 (1047 aa).

S-adenosyl-L-methionine contacts are provided by residues arginine 69, glycine 95, aspartate 122, 169–170 (DL), and glutamate 196. In terms of domain architecture, JmjC spans 814–1003 (GRQYLRSISA…AAGRDVYGNR (190 aa)).

Belongs to the methyltransferase superfamily. LCMT family.

It catalyses the reaction 7-[(3S)-3-amino-3-carboxypropyl]wyosine(37) in tRNA(Phe) + S-adenosyl-L-methionine = 7-[(3S)-(3-amino-3-methoxycarbonyl)propyl]wyosine(37) in tRNA(Phe) + S-adenosyl-L-homocysteine. The catalysed reaction is 7-[(3S)-(3-amino-3-methoxycarbonyl)propyl]wyosine(37) in tRNA(Phe) + S-adenosyl-L-methionine + CO2 = wybutosine(37) in tRNA(Phe) + S-adenosyl-L-homocysteine + 2 H(+). Its pathway is tRNA modification; wybutosine-tRNA(Phe) biosynthesis. Its function is as follows. Probable S-adenosyl-L-methionine-dependent methyltransferase that acts as a component of the wybutosine biosynthesis pathway. Wybutosine is a hyper modified guanosine with a tricyclic base found at the 3'-position adjacent to the anticodon of eukaryotic phenylalanine tRNA. May methylate the carboxyl group of leucine residues to form alpha-leucine ester residues. The chain is tRNA wybutosine-synthesizing protein 4 (ppm2) from Aspergillus fumigatus (strain ATCC MYA-4609 / CBS 101355 / FGSC A1100 / Af293) (Neosartorya fumigata).